The following is a 134-amino-acid chain: STAG3-like protein 3 (134 aa).

Residues 10–95 (PKVTCRDVLP…GCFKDWMVSM (86 aa)) enclose the SCD domain.

It belongs to the SCC3 family.

It localises to the nucleus. The protein is STAG3-like protein 3 (STAG3L3) of Homo sapiens (Human).